A 347-amino-acid polypeptide reads, in one-letter code: GMP reductase (347 aa).

Ala-108–Ala-131 is an NADP(+) binding site. K(+) contacts are provided by Gly-181 and Gly-183. The Thioimidate intermediate role is filled by Cys-186. An NADP(+)-binding site is contributed by Ile-216 to Val-239.

This sequence belongs to the IMPDH/GMPR family. GuaC type 1 subfamily. In terms of assembly, homotetramer.

It carries out the reaction IMP + NH4(+) + NADP(+) = GMP + NADPH + 2 H(+). Its function is as follows. Catalyzes the irreversible NADPH-dependent deamination of GMP to IMP. It functions in the conversion of nucleobase, nucleoside and nucleotide derivatives of G to A nucleotides, and in maintaining the intracellular balance of A and G nucleotides. This chain is GMP reductase, found in Yersinia enterocolitica serotype O:8 / biotype 1B (strain NCTC 13174 / 8081).